A 394-amino-acid chain; its full sequence is uncharacterized protein (394 aa).

11 consecutive transmembrane segments (helical) span residues 10-30 (PALI…NYYA), 50-70 (FIVT…VPLG), 79-99 (IVSM…SQSL), 100-120 (AMMI…QILV), 138-158 (TIMS…GLLA), 166-186 (VFWV…RGLP), 218-238 (LLGC…AFLL), 243-263 (FNYS…GALG), 291-311 (WLAI…ILVL), 337-357 (LTAG…LISA), and 364-384 (GWAG…LVWW).

This sequence belongs to the major facilitator superfamily.

It localises to the cell inner membrane. This is an uncharacterized protein from Escherichia coli (strain K12).